A 348-amino-acid polypeptide reads, in one-letter code: Heat-inducible transcription repressor HrcA (348 aa).

The protein belongs to the HrcA family.

Negative regulator of class I heat shock genes (grpE-dnaK-dnaJ and groELS operons). Prevents heat-shock induction of these operons. In Lacticaseibacillus casei (strain BL23) (Lactobacillus casei), this protein is Heat-inducible transcription repressor HrcA.